Here is a 122-residue protein sequence, read N- to C-terminus: Large ribosomal subunit protein uL14c (122 aa).

The protein belongs to the universal ribosomal protein uL14 family. In terms of assembly, part of the 50S ribosomal subunit.

It is found in the plastid. Functionally, binds to 23S rRNA. The sequence is that of Large ribosomal subunit protein uL14c from Cuscuta reflexa (Southern Asian dodder).